Reading from the N-terminus, the 306-residue chain is MESRLKPGLIVLCGPTAAGKSSLAIAIAQRLGSPILSADSRLVYRDFNIGTAKPTPAEQQQVPHYLMDLCDPRQVFTVGDYQDCAVPLIQQLQEKGMLPLLVGGTGLYIKAIVNGLRFPRIAPQPKLRSQLQALGQPLCHALLQRVDPVAGDRIHVNDRVRTLRALEVFYVSGDRLTDLQQEQPPSYPILQIGLDSDRLEARIQQRTQQMLTSGFVEEVQGLCDRYGSDLPLLNTLGYRQVCAFLQGSLSRSELPEQIVLQTRQYAKQQRTWFRADSSIQWIDAEAGNRLERALDLIERFRKSEGV.

14–21 (GPTAAGKS) contacts ATP. Residue 16-21 (TAAGKS) participates in substrate binding. Positions 39 to 42 (DSRL) are interaction with substrate tRNA.

This sequence belongs to the IPP transferase family. Monomer. The cofactor is Mg(2+).

The catalysed reaction is adenosine(37) in tRNA + dimethylallyl diphosphate = N(6)-dimethylallyladenosine(37) in tRNA + diphosphate. Catalyzes the transfer of a dimethylallyl group onto the adenine at position 37 in tRNAs that read codons beginning with uridine, leading to the formation of N6-(dimethylallyl)adenosine (i(6)A). The protein is tRNA dimethylallyltransferase of Synechococcus sp. (strain ATCC 27144 / PCC 6301 / SAUG 1402/1) (Anacystis nidulans).